The chain runs to 146 residues: MKLHELKAAEGSRKVRNRVGRGTSSGNGKTSGRGQKGQKARSGGGVRLGFEGGQTPLFRRIPKRGFTNINTKEYALVNLDQLNVFDDGTEVTPAILKDAGIVRAEKSGVKVLGNGELTKKLTVKAAKFSKSAEAAIIAKGGSIEVI.

Positions 1–13 are enriched in basic and acidic residues; that stretch reads MKLHELKAAEGSR. Residues 1–51 form a disordered region; the sequence is MKLHELKAAEGSRKVRNRVGRGTSSGNGKTSGRGQKGQKARSGGGVRLGFE. 2 stretches are compositionally biased toward gly residues: residues 23–35 and 42–51; these read TSSG…GRGQ and SGGGVRLGFE.

This sequence belongs to the universal ribosomal protein uL15 family. Part of the 50S ribosomal subunit.

Functionally, binds to the 23S rRNA. The protein is Large ribosomal subunit protein uL15 of Streptococcus pyogenes serotype M1.